The following is a 320-amino-acid chain: Acetyl-coenzyme A carboxylase carboxyl transferase subunit alpha (320 aa).

In terms of domain architecture, CoA carboxyltransferase C-terminal spans 41-295 (KIEEKAQQAL…GDAIAAAFAE (255 aa)).

It belongs to the AccA family. Acetyl-CoA carboxylase is a heterohexamer composed of biotin carboxyl carrier protein (AccB), biotin carboxylase (AccC) and two subunits each of ACCase subunit alpha (AccA) and ACCase subunit beta (AccD).

It is found in the cytoplasm. The catalysed reaction is N(6)-carboxybiotinyl-L-lysyl-[protein] + acetyl-CoA = N(6)-biotinyl-L-lysyl-[protein] + malonyl-CoA. The protein operates within lipid metabolism; malonyl-CoA biosynthesis; malonyl-CoA from acetyl-CoA: step 1/1. Its function is as follows. Component of the acetyl coenzyme A carboxylase (ACC) complex. First, biotin carboxylase catalyzes the carboxylation of biotin on its carrier protein (BCCP) and then the CO(2) group is transferred by the carboxyltransferase to acetyl-CoA to form malonyl-CoA. This is Acetyl-coenzyme A carboxylase carboxyl transferase subunit alpha from Rhodopseudomonas palustris (strain ATCC BAA-98 / CGA009).